The sequence spans 66 residues: MAKSKDVRVTIILECTSCVRNGVNKESTGISRYITQKNRHNTPSRLELKKFCPYCYKHTIHGEIKK.

This sequence belongs to the bacterial ribosomal protein bL33 family.

The protein localises to the plastid. Its subcellular location is the chloroplast. The protein is Large ribosomal subunit protein bL33c of Gossypium barbadense (Sea Island cotton).